Here is a 382-residue protein sequence, read N- to C-terminus: D-galactonate dehydratase (382 aa).

Aspartate 183 is a binding site for Mg(2+). Residue histidine 185 is the Proton donor of the active site. Positions 209 and 235 each coordinate Mg(2+). The active-site Proton acceptor is histidine 285.

It belongs to the mandelate racemase/muconate lactonizing enzyme family. GalD subfamily. Mg(2+) is required as a cofactor.

The catalysed reaction is D-galactonate = 2-dehydro-3-deoxy-D-galactonate + H2O. It participates in carbohydrate acid metabolism; D-galactonate degradation; D-glyceraldehyde 3-phosphate and pyruvate from D-galactonate: step 1/3. Functionally, catalyzes the dehydration of D-galactonate to 2-keto-3-deoxy-D-galactonate. This is D-galactonate dehydratase from Escherichia coli O9:H4 (strain HS).